Reading from the N-terminus, the 218-residue chain is Oxygen regulatory protein NreC (218 aa).

One can recognise a Response regulatory domain in the interval Lys2–Tyr119. Position 53 is a 4-aspartylphosphate (Asp53). An HTH luxR-type domain is found at Ser149 to Lys214. The segment at residues Asn173 to Thr192 is a DNA-binding region (H-T-H motif).

In terms of processing, phosphorylated by NreB.

It localises to the cytoplasm. In terms of biological role, member of the two-component regulatory system NreB/NreC involved in the control of dissimilatory nitrate/nitrite reduction in response to oxygen. Phosphorylated NreC binds to a GC-rich palindromic sequence at the promoters of the nitrate (narGHJI) and nitrite (nir) reductase operons, as well as the putative nitrate transporter gene narT, and activates their expression. This is Oxygen regulatory protein NreC (nreC) from Staphylococcus epidermidis (strain ATCC 35984 / DSM 28319 / BCRC 17069 / CCUG 31568 / BM 3577 / RP62A).